A 408-amino-acid chain; its full sequence is Succinylornithine transaminase (408 aa).

Position 252 is an N6-(pyridoxal phosphate)lysine (Lys252).

Belongs to the class-III pyridoxal-phosphate-dependent aminotransferase family. AstC subfamily. Pyridoxal 5'-phosphate serves as cofactor.

It catalyses the reaction N(2)-succinyl-L-ornithine + 2-oxoglutarate = N-succinyl-L-glutamate 5-semialdehyde + L-glutamate. It participates in amino-acid degradation; L-arginine degradation via AST pathway; L-glutamate and succinate from L-arginine: step 3/5. Its function is as follows. Catalyzes the transamination of N(2)-succinylornithine and alpha-ketoglutarate into N(2)-succinylglutamate semialdehyde and glutamate. Can also act as an acetylornithine aminotransferase. The sequence is that of Succinylornithine transaminase from Salmonella dublin (strain CT_02021853).